Reading from the N-terminus, the 607-residue chain is Methylmalonate-semialdehyde dehydrogenase [acylating], mitochondrial (607 aa).

Positions 1-69 (MVRVKQKNLE…KLRSSSSTTT (69 aa)) are disordered. A mitochondrion-targeting transit peptide spans 1-98 (MVRVKQKNLE…QFLALRSSWL (98 aa)). Polar residues predominate over residues 9 to 30 (LESYRSNGTYPPTWRNPTTSFA). The span at 42-51 (LKSKTKRRRL) shows a compositional bias: basic residues. NAD(+) contacts are provided by phenylalanine 259, lysine 283, glutamate 286, lysine 287, and serine 336. Residue cysteine 391 is the Nucleophile of the active site. Glutamate 491 is an NAD(+) binding site.

This sequence belongs to the aldehyde dehydrogenase family.

The protein resides in the mitochondrion. The enzyme catalyses 2-methyl-3-oxopropanoate + NAD(+) + CoA + H2O = propanoyl-CoA + hydrogencarbonate + NADH + H(+). The protein is Methylmalonate-semialdehyde dehydrogenase [acylating], mitochondrial (ALDH6B2) of Arabidopsis thaliana (Mouse-ear cress).